The chain runs to 350 residues: Anthranilate phosphoribosyltransferase (350 aa).

Residues G81, G84–D85, T89, N91–T94, K109–S117, and S121 each bind 5-phospho-alpha-D-ribose 1-diphosphate. Position 81 (G81) interacts with anthranilate. S93 provides a ligand contact to Mg(2+). R167 contacts anthranilate. Mg(2+) contacts are provided by D230 and E231.

This sequence belongs to the anthranilate phosphoribosyltransferase family. In terms of assembly, homodimer. Mg(2+) is required as a cofactor.

It catalyses the reaction N-(5-phospho-beta-D-ribosyl)anthranilate + diphosphate = 5-phospho-alpha-D-ribose 1-diphosphate + anthranilate. It functions in the pathway amino-acid biosynthesis; L-tryptophan biosynthesis; L-tryptophan from chorismate: step 2/5. In terms of biological role, catalyzes the transfer of the phosphoribosyl group of 5-phosphorylribose-1-pyrophosphate (PRPP) to anthranilate to yield N-(5'-phosphoribosyl)-anthranilate (PRA). The sequence is that of Anthranilate phosphoribosyltransferase from Nitrosospira multiformis (strain ATCC 25196 / NCIMB 11849 / C 71).